The following is a 44-amino-acid chain: Phosphatase RapA inhibitor (44 aa).

The propeptide occupies 1–39 (MKSKWMSGLLLVAVGFSFTQVMVHAGETANTEGKTFHIA).

This sequence belongs to the Phr family. As to quaternary structure, interacts with RapA and inhibits its interaction with Spo0F. In terms of processing, secreted with a propeptide domain, which is cleaved in the cell wall by the secreted serine proteases subtilisin and Vpr to produce a mature signaling peptide. Contains a predicted signal peptide cleavage site in the N-terminal region, however the propeptide is probably subject to only one processing event, at the N-terminal end of the mature peptide.

It localises to the secreted. Its subcellular location is the cytoplasm. With respect to regulation, inhibition of RapA requires a free carboxylate group at the C-terminal end of the PhrA pentapeptide. A free C-terminal carboxylic acid PhrA pentapeptide inhibits RapA phosphatase activity at a 1:1 ratio and is approximately 200 fold more active than a C-terminal amide peptide. Signaling molecule involved in the regulation of sporulation. Secreted during production, but the mature peptide acts intracellularly, indicating that it needs to be imported into the cell to function. Inhibitor of the RapA phosphatase activity. Does not act on RapB. The protein is Phosphatase RapA inhibitor of Bacillus subtilis (strain 168).